A 326-amino-acid chain; its full sequence is Nuclear egress protein 1 (326 aa).

A CCCH-type zinc finger spans residues 115–244; the sequence is CLSLSGMGYY…YAVFPTKSVH (130 aa).

It belongs to the herpesviridae NEC1 protein family. In terms of assembly, forms a heterohexameric complex with NEC2. Interacts with capsid vertex specific component 2/CVC2; this interaction directs the capsid to the host inner nuclear membrane to initiate budding. In terms of processing, phosphorylated at serine residues in the N-terminus. This phosphorylation regulates the localization within the inner nuclear membrane.

Its subcellular location is the host nucleus inner membrane. In terms of biological role, plays an essential role in virion nuclear egress, the first step of virion release from infected cell. Within the host nucleus, NEC1 interacts with the newly formed capsid through the vertexes and directs it to the inner nuclear membrane by associating with NEC2. Induces the budding of the capsid at the inner nuclear membrane as well as its envelopment into the perinuclear space. There, the NEC1/NEC2 complex promotes the fusion of the enveloped capsid with the outer nuclear membrane and the subsequent release of the viral capsid into the cytoplasm where it will reach the secondary budding sites in the host Golgi or trans-Golgi network. This Equine herpesvirus 1 (strain Ab4p) (EHV-1) protein is Nuclear egress protein 1.